The following is a 1408-amino-acid chain: Palladin (1408 aa).

The interval Ser-69–Gln-229 is disordered. Composition is skewed to polar residues over residues Pro-149–Leu-169 and Arg-193–Gln-229. A Phosphoserine modification is found at Ser-194. Ig-like C2-type domains lie at Pro-278–Phe-367 and Pro-448–Thr-546. 2 disulfides stabilise this stretch: Cys-299–Cys-351 and Cys-469–Cys-528. An interaction with VASP region spans residues Phe-569–Pro-573. Disordered regions lie at residues Asn-631–Pro-660 and Pro-687–Glu-727. Phosphoserine is present on Ser-639. The residue at position 642 (Thr-642) is a Phosphothreonine. Ser-648 is subject to Phosphoserine. Residues Pro-653–Trp-683 are interaction with LASP1. The interval Trp-683–Ala-713 is interaction with SORBS2, SPIN90 and SRC. The segment covering Pro-691–Ala-701 has biased composition (low complexity). Ser-700, Ser-704, and Ser-744 each carry phosphoserine. Over residues Pro-702–Phe-714 the composition is skewed to pro residues. Disordered regions lie at residues Asn-758 to Pro-854, Lys-882 to Glu-904, and Glu-960 to Gln-981. Residues Leu-765 to Ser-779 show a composition bias toward low complexity. Composition is skewed to pro residues over residues Pro-780–Val-797, Ser-807–Phe-818, and Asp-828–Pro-840. An interaction with EPS8 region spans residues Ser-782 to Ser-842. Positions Ser-807 to Ser-842 are interaction with SORBS2, SPIN90, SRC and PFN1. The tract at residues Phe-830–Pro-834 is interaction with VASP. Residue Ser-901 is modified to Phosphoserine. 2 positions are modified to phosphoserine: Ser-1004 and Ser-1009. One can recognise an Ig-like C2-type 3 domain in the interval Pro-1026 to Ser-1110. The tract at residues Asn-1121–Asn-1150 is disordered. Positions Arg-1123–His-1133 are enriched in low complexity. Residues Ser-1126, Ser-1129, Ser-1131, and Ser-1141 each carry the phosphoserine modification. At Ser-1143 the chain carries Phosphoserine; by PKB/AKT1. Ser-1146 is subject to Phosphoserine. Ig-like C2-type domains follow at residues Pro-1160 to Ala-1251 and Pro-1259 to Asp-1349. 2 interaction with EZR regions span residues Phe-1162–Ala-1251 and Phe-1261–Tyr-1351. An intrachain disulfide couples Cys-1181 to Cys-1233. Ser-1377 carries the phosphoserine modification.

Belongs to the myotilin/palladin family. In terms of assembly, interacts with EPS8. Interacts with LASP1. Interacts with VASP. Interacts with ACTN. Interacts with SORBS2. Interacts with PFN1. Interacts with LPP. Interacts with SPIN90. Interacts with SRC. Interacts with EZR. Interacts with RAI14. In terms of processing, phosphorylated predominantly on serines and, to a lesser extent, on tyrosines. Phosphorylation at Ser-1143 by PKB/AKT1 modulates cytoskeletal organization and cell motility. Detected in both muscle and non-muscle tissues and cells (at protein level). Isoform 3 is widely expressed, isoform 4 is particularly abundant in tissues rich in smooth muscle and in the cardiac muscle and isoform 1 is detected in heart.

Its subcellular location is the cytoplasm. It localises to the cytoskeleton. The protein localises to the cell junction. The protein resides in the focal adhesion. It is found in the myofibril. Its subcellular location is the sarcomere. It localises to the z line. The protein localises to the cell projection. The protein resides in the ruffle. It is found in the podosome. Its subcellular location is the lamellipodium. It localises to the axon. The protein localises to the growth cone. In terms of biological role, cytoskeletal protein required for organization of normal actin cytoskeleton. Roles in establishing cell morphology, motility, cell adhesion and cell-extracellular matrix interactions in a variety of cell types. May function as a scaffolding molecule with the potential to influence both actin polymerization and the assembly of existing actin filaments into higher-order arrays. Binds to proteins that bind to either monomeric or filamentous actin. Localizes at sites where active actin remodeling takes place, such as lamellipodia and membrane ruffles. Different isoforms may have functional differences. Involved in the control of morphological and cytoskeletal changes associated with dendritic cell maturation. Involved in targeting ACTN to specific subcellular locations. May be required for the initiation of neural tube closure. The protein is Palladin (Palld) of Mus musculus (Mouse).